The following is a 247-amino-acid chain: 2,5-diamino-6-ribosylamino-4(3H)-pyrimidinone 5'-phosphate reductase (247 aa).

NADP(+) contacts are provided by residues Thr75, Asp79, Gly165, and 187-191 (GASII).

The protein belongs to the HTP reductase family. In terms of assembly, homodimer.

It carries out the reaction 2,5-diamino-6-(1-D-ribitylamino)pyrimidin-4(3H)-one 5'-phosphate + NADP(+) = 2,5-diamino-6-(1-D-ribosylamino)pyrimidin-4(3H)-one 5'-phosphate + NADPH + H(+). The enzyme catalyses 2,5-diamino-6-(1-D-ribitylamino)pyrimidin-4(3H)-one 5'-phosphate + NAD(+) = 2,5-diamino-6-(1-D-ribosylamino)pyrimidin-4(3H)-one 5'-phosphate + NADH + H(+). It functions in the pathway cofactor biosynthesis; riboflavin biosynthesis. Catalyzes an early step in riboflavin biosynthesis, the NADPH-dependent reduction of the ribose side chain of 2,5-diamino-6-ribosylamino-4(3H)-pyrimidinone 5'-phosphate, yielding 2,5-diamino-6-ribitylamino-4(3H)-pyrimidinone 5'-phosphate. The polypeptide is 2,5-diamino-6-ribosylamino-4(3H)-pyrimidinone 5'-phosphate reductase (RIB7) (Debaryomyces hansenii (strain ATCC 36239 / CBS 767 / BCRC 21394 / JCM 1990 / NBRC 0083 / IGC 2968) (Yeast)).